The following is a 192-amino-acid chain: Imidazoleglycerol-phosphate dehydratase (192 aa).

It belongs to the imidazoleglycerol-phosphate dehydratase family.

Its subcellular location is the cytoplasm. The catalysed reaction is D-erythro-1-(imidazol-4-yl)glycerol 3-phosphate = 3-(imidazol-4-yl)-2-oxopropyl phosphate + H2O. It participates in amino-acid biosynthesis; L-histidine biosynthesis; L-histidine from 5-phospho-alpha-D-ribose 1-diphosphate: step 6/9. The polypeptide is Imidazoleglycerol-phosphate dehydratase (Staphylococcus saprophyticus subsp. saprophyticus (strain ATCC 15305 / DSM 20229 / NCIMB 8711 / NCTC 7292 / S-41)).